Here is a 70-residue protein sequence, read N- to C-terminus: Large ribosomal subunit protein uL29 (70 aa).

The protein belongs to the universal ribosomal protein uL29 family.

The chain is Large ribosomal subunit protein uL29 (rpl29) from Methanocaldococcus jannaschii (strain ATCC 43067 / DSM 2661 / JAL-1 / JCM 10045 / NBRC 100440) (Methanococcus jannaschii).